We begin with the raw amino-acid sequence, 660 residues long: MRSCVRTASSVLQSWRAHTVLRNGCPLPSRTLERLPRLARSYAMAYKPQGELEKRIAEIPIERYRNFCIVAHVDHGKSTLSDRLLELTGTIQPGGNKQILDRLDVERERGITVKAQTCSMIYNYQGDDYLLHLVDTPGHVDFRAEVSRSYASCGGALLLVDASQGVQAQTVANFYLAFSQGLTLVPVLNKVDLPHADPPRVLEQMHDTFELDPEAAVLVSAKTGLNVASLLPAVVEKIPAPVGDLSKPLRMLLVDSWYDVYKGVILLVRVFDGQVRPGDTIRSFATGLKYIVGEVGIMYPDQTPQTVLKAGQVGYIHFNPGMKKSQEAKVGDTYTTLGSEKLVEPYPGFEEPKSMVFVAAYPTDQDNHEHLEDSIEQITLNDRSVTLQKESSDALGAGWRLGFLGTLHCSVFEDRLRQEHGANIIITPPSVPFKVIWRDGTESIITNPNEFPDQDQAHFRVQEVHEPYVQATITLPDEYLGEVIKLCESNRGEQKELTFFTATQVILKYDIPLSHLVDDFFGKLKGATKGYASLDYEDAGFHKSSIVKLNLLVNGAPVDAVSRVLHTSQVDKVGRAWVEKFKVHVERQMFEVIIQAAAGRRIVARATIKPFRKDVLAKLHASDLSRRRKLLEKQKEGRKKLRAVGSVVIEQEAFQKFLAK.

Residues 1–42 (MRSCVRTASSVLQSWRAHTVLRNGCPLPSRTLERLPRLARSY) constitute a mitochondrion transit peptide. One can recognise a tr-type G domain in the interval 62 to 242 (ERYRNFCIVA…AVVEKIPAPV (181 aa)). Residues 71 to 78 (AHVDHGKS), 135 to 139 (DTPGH), and 189 to 192 (NKVD) each bind GTP.

It belongs to the TRAFAC class translation factor GTPase superfamily. Classic translation factor GTPase family. LepA subfamily.

The protein resides in the mitochondrion inner membrane. The enzyme catalyses GTP + H2O = GDP + phosphate + H(+). Promotes mitochondrial protein synthesis. May act as a fidelity factor of the translation reaction, by catalyzing a one-codon backward translocation of tRNAs on improperly translocated ribosomes. Binds to mitochondrial ribosomes in a GTP-dependent manner. The polypeptide is Translation factor GUF1, mitochondrial (Phaeosphaeria nodorum (strain SN15 / ATCC MYA-4574 / FGSC 10173) (Glume blotch fungus)).